We begin with the raw amino-acid sequence, 319 residues long: Ribosomal large subunit pseudouridine synthase C (319 aa).

Residues 20–83 (QRIDNFLRTQ…AEREEEAVSP (64 aa)) form the S4 RNA-binding domain. Aspartate 144 is an active-site residue.

The protein belongs to the pseudouridine synthase RluA family.

It catalyses the reaction uridine(955/2504/2580) in 23S rRNA = pseudouridine(955/2504/2580) in 23S rRNA. In terms of biological role, responsible for synthesis of pseudouridine from uracil at positions 955, 2504 and 2580 in 23S ribosomal RNA. The polypeptide is Ribosomal large subunit pseudouridine synthase C (Escherichia coli (strain K12)).